The following is a 114-amino-acid chain: Transcription factor S1 (114 aa).

An N-ZR region spans residues 1–43 (MIVVKFCPKCNSMMVPKKSNGKNVYRCTKCGYEKEVPETTIVV). 6 residues coordinate Zn(2+): cysteine 7, cysteine 10, cysteine 27, cysteine 30, cysteine 75, and cysteine 78. Positions 63-114 (MPSGAQKIKGVLCPSCKNDEAYFWILQTRRADEPPTRFYKCTKCGKVWREYE) are C-ZR. The TFIIS-type zinc-finger motif lies at 71–111 (KGVLCPSCKNDEAYFWILQTRRADEPPTRFYKCTKCGKVWR). Catalysis depends on residues aspartate 94 and glutamate 95. Cysteine 103 and cysteine 106 together coordinate Zn(2+).

This sequence belongs to the archaeal RpoM/eukaryotic RPA12/RPB9/RPC11 RNA polymerase family. Interacts with RNA polymerase; probably competes with TFS4 for the same binding site. Requires Zn(2+) as cofactor.

Induces RNA cleavage activity in the RNA polymerase. Induces rapid cleavage of a stalled transcription elongation complex with a 2-nucleotide reduction at the 3' end of the nascent RNA. Truncated RNA is able to resume elongation. During transcription elongation it enhances processivity. Involved in transcriptional proofreading and fidelity. Misincorporation of nucleotides during elongation of transcription leads to arrested elongation complexes which are rescued by TFS-promoted removal of a dinucleotide from the 3'-end. TFS1 is able to induce a cleavage resynthesis cycle in stalled elongation complexes (resulting from the next missing nucleotide or a reduced incorporation rate of a wrong nucleotide) preventing misincorporation and enabling proofreading in a post-incorporation manner. Pausing of elongation complexes is the main determinant of TFS-induced RNA cleavage. In Saccharolobus solfataricus (strain ATCC 35092 / DSM 1617 / JCM 11322 / P2) (Sulfolobus solfataricus), this protein is Transcription factor S1.